The primary structure comprises 246 residues: Biosynthetic peptidoglycan transglycosylase (246 aa).

A helical transmembrane segment spans residues 20–42; it reads WLRWLMAAPLLFAAASVLQVLIL.

It belongs to the glycosyltransferase 51 family.

Its subcellular location is the cell inner membrane. The enzyme catalyses [GlcNAc-(1-&gt;4)-Mur2Ac(oyl-L-Ala-gamma-D-Glu-L-Lys-D-Ala-D-Ala)](n)-di-trans,octa-cis-undecaprenyl diphosphate + beta-D-GlcNAc-(1-&gt;4)-Mur2Ac(oyl-L-Ala-gamma-D-Glu-L-Lys-D-Ala-D-Ala)-di-trans,octa-cis-undecaprenyl diphosphate = [GlcNAc-(1-&gt;4)-Mur2Ac(oyl-L-Ala-gamma-D-Glu-L-Lys-D-Ala-D-Ala)](n+1)-di-trans,octa-cis-undecaprenyl diphosphate + di-trans,octa-cis-undecaprenyl diphosphate + H(+). It functions in the pathway cell wall biogenesis; peptidoglycan biosynthesis. Peptidoglycan polymerase that catalyzes glycan chain elongation from lipid-linked precursors. In Xanthomonas axonopodis pv. citri (strain 306), this protein is Biosynthetic peptidoglycan transglycosylase.